We begin with the raw amino-acid sequence, 289 residues long: MDRLSSHNATKEVVQKYNFKFSKSLGQNFLIDSNIIDKILSGARITRGDNIIEVGPGIGTLTREMGKIAEKVVAIEIDRNLIPILKDTLSDLDNTEVVNQDILKVDIQELVKDKLNGGPVKLVANLPYYITTPIVMKFLEEDIPVTDIVVMVQKEVADRMNAIPGTKDYGALSIAVQYYCDTEIVAKAPRHMFIPQPNVDSTVIGLHVRDKRKYDVHNEDIFFKTVKASFGQRRKTLLNSLGGLGFLNKDEIREILKEANIDEKRRGETLSIEEFSVLSNIINTKVSSK.

Residues Asn28, Leu30, Gly55, Glu76, Asp101, and Asn125 each coordinate S-adenosyl-L-methionine.

Belongs to the class I-like SAM-binding methyltransferase superfamily. rRNA adenine N(6)-methyltransferase family. RsmA subfamily.

The protein resides in the cytoplasm. It carries out the reaction adenosine(1518)/adenosine(1519) in 16S rRNA + 4 S-adenosyl-L-methionine = N(6)-dimethyladenosine(1518)/N(6)-dimethyladenosine(1519) in 16S rRNA + 4 S-adenosyl-L-homocysteine + 4 H(+). Functionally, specifically dimethylates two adjacent adenosines (A1518 and A1519) in the loop of a conserved hairpin near the 3'-end of 16S rRNA in the 30S particle. May play a critical role in biogenesis of 30S subunits. The protein is Ribosomal RNA small subunit methyltransferase A of Clostridioides difficile (strain 630) (Peptoclostridium difficile).